Reading from the N-terminus, the 59-residue chain is Potassium channel toxin alpha-KTx 1.12 (59 aa).

A signal peptide spans 1–22 (MKILSVLLLALIICSIVGWSEA). Residue Gln-23 is modified to Pyrrolidone carboxylic acid. 3 disulfides stabilise this stretch: Cys-29/Cys-50, Cys-35/Cys-55, and Cys-39/Cys-57. Residues 48–55 (GKCMNKKC) form an interaction with Ca(2+)-activated K(+) channels region.

This sequence belongs to the short scorpion toxin superfamily. Potassium channel inhibitor family. Alpha-KTx 01 subfamily. As to expression, expressed by the venom gland.

It localises to the secreted. Potent selective inhibitor of high conductance (maxi-K), different medium and small conductance calcium-activated potassium channels (KCa1.1/KCNMA1 and others), as well as a voltage-dependent potassium channel (Kv1.3/KCNA3&gt;Kv1.2/KCNA2&gt;Kv1.6/KCNA3&gt;&gt;Shaker/Sh). It blocks channel activity by a simple bimolecular inhibition process. Its function is as follows. Has a pH-specific antimicrobial activity against bacteria (B.subtilis, E.coli and S.aureus) and the fungus C.albicans. The sequence is that of Potassium channel toxin alpha-KTx 1.12 from Leiurus hebraeus (Hebrew deathstalker scorpion).